Consider the following 283-residue polypeptide: Thymidylate synthase (283 aa).

Arginine 22 is a dUMP binding site. The Nucleophile role is filled by cysteine 160. DUMP is bound by residues 180–183, asparagine 191, and 221–223; these read RSCD and HIY. (6R)-5,10-methylene-5,6,7,8-tetrahydrofolate is bound at residue aspartate 183. Serine 282 provides a ligand contact to (6R)-5,10-methylene-5,6,7,8-tetrahydrofolate.

This sequence belongs to the thymidylate synthase family. Bacterial-type ThyA subfamily. As to quaternary structure, homodimer.

The protein localises to the cytoplasm. The catalysed reaction is dUMP + (6R)-5,10-methylene-5,6,7,8-tetrahydrofolate = 7,8-dihydrofolate + dTMP. It functions in the pathway pyrimidine metabolism; dTTP biosynthesis. Its function is as follows. Catalyzes the reductive methylation of 2'-deoxyuridine-5'-monophosphate (dUMP) to 2'-deoxythymidine-5'-monophosphate (dTMP) while utilizing 5,10-methylenetetrahydrofolate (mTHF) as the methyl donor and reductant in the reaction, yielding dihydrofolate (DHF) as a by-product. This enzymatic reaction provides an intracellular de novo source of dTMP, an essential precursor for DNA biosynthesis. The chain is Thymidylate synthase from Mannheimia succiniciproducens (strain KCTC 0769BP / MBEL55E).